A 291-amino-acid chain; its full sequence is D-alanine--D-alanine ligase (291 aa).

The region spanning lysine 99 to threonine 291 is the ATP-grasp domain. Glutamate 125–threonine 179 lines the ATP pocket. Mg(2+) contacts are provided by aspartate 245, glutamate 258, and asparagine 260.

This sequence belongs to the D-alanine--D-alanine ligase family. Mg(2+) is required as a cofactor. The cofactor is Mn(2+).

It localises to the cytoplasm. The catalysed reaction is 2 D-alanine + ATP = D-alanyl-D-alanine + ADP + phosphate + H(+). Its pathway is cell wall biogenesis; peptidoglycan biosynthesis. In terms of biological role, cell wall formation. In Aquifex aeolicus (strain VF5), this protein is D-alanine--D-alanine ligase.